The following is a 610-amino-acid chain: Modifier of mdg4 (610 aa).

The interval 1-160 (MADDEQFSLC…QQPRASARYK (160 aa)) is self-association. An interaction with Chi region spans residues 1 to 308 (MADDEQFSLC…EEAEYIDLPM (308 aa)). Residues 32-98 (VDVSLAAEGQ…MYCGEVNVKQ (67 aa)) form the BTB domain. Disordered regions lie at residues 115–156 (GLTD…PRAS), 219–259 (VSTN…DSTT), 311–339 (PTKSEPDYSEDHGDAAGDAEGTYVEDDTY), and 386–432 (ESSF…PKPK). Pro residues predominate over residues 122–135 (APQPPQESSPPPAA). Over residues 136 to 156 (PHVQQQQIPAQRVQRQQPRAS) the composition is skewed to low complexity. A compositionally biased stretch (polar residues) spans 222–238 (NKRSAQRSSLTPASSSA). Ser-230 carries the phosphoserine modification. The segment covering 312-325 (TKSEPDYSEDHGDA) has biased composition (basic and acidic residues). Residues 386 to 400 (ESSFVDTSGDQGNTE) show a composition bias toward polar residues. Residues 401-410 (AQAATSASAT) are compositionally biased toward low complexity. The span at 422 to 432 (TKVEDQTPKPK) shows a compositional bias: basic and acidic residues. Residues 452–512 (YASTTKGGVK…VFPYEGEHVH (61 aa)) form an FLYWCH-type zinc finger. The interval 551-610 (LEEADDKEDEDFEEFEIQEIDEIELDEPEKTPAKEEEVDPNDFREKIKRRLQKALQNKKK) is interaction with su(Hw). The segment covering 567-577 (IQEIDEIELDE) has biased composition (acidic residues). The interval 567-595 (IQEIDEIELDEPEKTPAKEEEVDPNDFRE) is disordered. Positions 578 to 595 (PEKTPAKEEEVDPNDFRE) are enriched in basic and acidic residues.

Can self-associate. Interacts with Chi. Interacts with Top2. Isoform mod2.2: Component of the gypsy chromatin insulator complex, composed of Cp190, mod(mdg4) and su(Hw). The gypsy chromatin insulator complex interacts with Topors via mod(mdg4) and su(Hw). Isoform mod2.2 interacts with Trl/GAGA and interaction with this protein may bypass the repressive effects of the su(Hw) insulator.

It is found in the nucleus. Its subcellular location is the chromosome. Component of the gypsy chromatin insulator complex which is required for the function of the gypsy chromatin insulator and other endogenous chromatin insulators. Chromatin insulators are regulatory elements which establish independent domains of transcriptional activity within eukaryotic genomes. Insulators have two defining properties; they can block the communication between an enhancer and a promoter when placed between them and can also buffer transgenes from position effect variegation (PEV). Insulators are proposed to structure the chromatin fiber into independent domains of differing transcriptional potential by promoting the formation of distinct chromatin loops. This chromatin looping may involve the formation of insulator bodies, where homotypic interactions between individual subunits of the insulator complex could promote the clustering of widely spaced insulators at the nuclear periphery. Within the gypsy insulator complex, this protein may control the nature of the repressive effect of su(Hw): in the absence of mod(mdg4) protein, su(Hw) exerts a bidirectional silencing effect, whereas in the presence of mod(mdg4), the silencing effect is unidirectional. Isoform H is specifically required to maintain the pairing of achiasmate homologs in male meiosis I which is mediated by the rDNA repeats on the achiasmate X-Y bivalents. Isoform H also plays a role in apoptotic regulatory pathways. The polypeptide is Modifier of mdg4 (Drosophila melanogaster (Fruit fly)).